Reading from the N-terminus, the 180-residue chain is Cytochrome b6-f complex iron-sulfur subunit (180 aa).

A helical transmembrane segment spans residues 21-43 (LLTFGTITGTALGALYPVVKYFI). Positions 66-162 (VSEYLAKHLP…ATVTEDDKLV (97 aa)) constitute a Rieske domain. [2Fe-2S] cluster is bound by residues Cys-108, His-110, Cys-126, and His-129. Cys-113 and Cys-128 are oxidised to a cystine.

It belongs to the Rieske iron-sulfur protein family. In terms of assembly, the 4 large subunits of the cytochrome b6-f complex are cytochrome b6, subunit IV (17 kDa polypeptide, PetD), cytochrome f and the Rieske protein, while the 4 small subunits are PetG, PetL, PetM and PetN. The complex functions as a dimer. It depends on [2Fe-2S] cluster as a cofactor.

The protein resides in the cellular thylakoid membrane. The catalysed reaction is 2 oxidized [plastocyanin] + a plastoquinol + 2 H(+)(in) = 2 reduced [plastocyanin] + a plastoquinone + 4 H(+)(out). Component of the cytochrome b6-f complex, which mediates electron transfer between photosystem II (PSII) and photosystem I (PSI), cyclic electron flow around PSI, and state transitions. In Thermosynechococcus vestitus (strain NIES-2133 / IAM M-273 / BP-1), this protein is Cytochrome b6-f complex iron-sulfur subunit.